Reading from the N-terminus, the 125-residue chain is MPKKSFQRAERISVQIHRDLGALVQAAVRDHGLPSMSVSDVEVTRDMAHAKVFVTALQAERSFEAVAGLKALARELRMQLAHTMRLRFVPELHFHYDDSLDRGERINTLLRDLIPPADAEKDECG.

This sequence belongs to the RbfA family. Monomer. Binds 30S ribosomal subunits, but not 50S ribosomal subunits or 70S ribosomes.

Its subcellular location is the cytoplasm. Functionally, one of several proteins that assist in the late maturation steps of the functional core of the 30S ribosomal subunit. Associates with free 30S ribosomal subunits (but not with 30S subunits that are part of 70S ribosomes or polysomes). Required for efficient processing of 16S rRNA. May interact with the 5'-terminal helix region of 16S rRNA. This chain is Ribosome-binding factor A, found in Xylella fastidiosa (strain 9a5c).